The following is a 318-amino-acid chain: Protein IMPACT-A (318 aa).

Residues 14–116 (DEVEALTSIY…EKIREFLLGK (103 aa)) enclose the RWD domain. Positions 296-318 (EESSKQTAKSKKVGKECKKKADH) are disordered. The segment covering 308-318 (VGKECKKKADH) has biased composition (basic and acidic residues).

This sequence belongs to the IMPACT family. Interacts with GCN1; prevents the interaction of GCN1 with EIF2AK4/GCN2 and inhibits EIF2AK4/GCN2 kinase activity. Interaction with RPL39; this interaction occurs in a GCN1-independent manner. Associates with ribosomes; this interaction occurs in a GCN1-independent manner. Associates with actin; this interaction occurs in a GCN1-independent manner.

It is found in the cytoplasm. In terms of biological role, translational regulator that ensures constant high levels of translation upon a variety of stress conditions, such as amino acid starvation, UV-C irradiation, proteasome inhibitor treatment and glucose deprivation. Plays a role as a negative regulator of the EIF2AK4/GCN2 kinase activity; impairs GCN1-mediated EIF2AK4/GCN2 activation, and hence EIF2AK4/GCN2-mediated eIF-2-alpha phosphorylation and subsequent down-regulation of protein synthesis. Plays a role in differentiation of neuronal cells by stimulating neurite outgrowth. The protein is Protein IMPACT-A (impact-A) of Xenopus tropicalis (Western clawed frog).